A 578-amino-acid polypeptide reads, in one-letter code: Glucans biosynthesis protein G (578 aa).

The signal sequence occupies residues 1–37; sequence MIVSPCIAPRIPGTRLRKAMLAGVALVGLLSAGQLWA. The disordered stretch occupies residues 511–578; sequence VPVEAPKPAK…TWSYQLPADE (68 aa). The segment covering 517–543 has biased composition (basic and acidic residues); the sequence is KPAKDSKQDKAAAKHAHAKAEKAKAEQ. Over residues 544 to 554 the composition is skewed to low complexity; that stretch reads PAEQPAADAAS.

This sequence belongs to the OpgD/OpgG family.

It localises to the periplasm. It participates in glycan metabolism; osmoregulated periplasmic glucan (OPG) biosynthesis. In terms of biological role, involved in the biosynthesis of osmoregulated periplasmic glucans (OPGs). The polypeptide is Glucans biosynthesis protein G (Pseudomonas entomophila (strain L48)).